The primary structure comprises 334 residues: Glycerol-3-phosphate dehydrogenase [NAD(P)+] (334 aa).

3 residues coordinate NADPH: Ser-13, Phe-14, and Lys-108. Positions 108, 137, and 139 each coordinate sn-glycerol 3-phosphate. Ala-141 contacts NADPH. Positions 193, 246, 256, 257, and 258 each coordinate sn-glycerol 3-phosphate. Lys-193 acts as the Proton acceptor in catalysis. Arg-257 provides a ligand contact to NADPH. 2 residues coordinate NADPH: Val-281 and Glu-283.

This sequence belongs to the NAD-dependent glycerol-3-phosphate dehydrogenase family.

Its subcellular location is the cytoplasm. It carries out the reaction sn-glycerol 3-phosphate + NAD(+) = dihydroxyacetone phosphate + NADH + H(+). The enzyme catalyses sn-glycerol 3-phosphate + NADP(+) = dihydroxyacetone phosphate + NADPH + H(+). It functions in the pathway membrane lipid metabolism; glycerophospholipid metabolism. In terms of biological role, catalyzes the reduction of the glycolytic intermediate dihydroxyacetone phosphate (DHAP) to sn-glycerol 3-phosphate (G3P), the key precursor for phospholipid synthesis. The polypeptide is Glycerol-3-phosphate dehydrogenase [NAD(P)+] (Bartonella tribocorum (strain CIP 105476 / IBS 506)).